The chain runs to 212 residues: Cytidylate kinase (212 aa).

An ATP-binding site is contributed by 7 to 15; it reads GPAASGKGT.

The protein belongs to the cytidylate kinase family. Type 1 subfamily.

The protein localises to the cytoplasm. The catalysed reaction is CMP + ATP = CDP + ADP. It carries out the reaction dCMP + ATP = dCDP + ADP. The chain is Cytidylate kinase from Bradyrhizobium diazoefficiens (strain JCM 10833 / BCRC 13528 / IAM 13628 / NBRC 14792 / USDA 110).